We begin with the raw amino-acid sequence, 544 residues long: MNQSRRILRTVYLSLFLIGLFMLINDIFSSNILSSKSSDKEVQFDLNKSFDDNEISSVKSNSFNLINKSQDIVVETGIYVATFSTFKGNLVSLKLKNHLNLEKNPTDLINIDRKNETFFDISFDYFVDDLFLYKKIDDFNHEFKAYFKNNGKTYEYVKKYTFSKKDEYLMKFKVTVNGLEDYNLFDFDSYKIIFSSEIERLSDKAKLQYNNYLSQIIYYDNKLKYGKDGLRINNPRWIGSSTKYFGVLVSKENMEVEFKKERGTLKSFIINNVRNKKNISDEFFIYAGPKDNRYLDVFDKRDDNTFGLFDIFFGMSVEKSFWYLIQVPMQMVMQVFYDVIPNWGLSIIFLTIVVRILIFPLTFKGFRATAELSKLQPKMKELQAKFKHDPKKLNEEMGRLYKEEGVNPLGGCLPVILQLPIFFALYSLVNNLFLLRGASFIPGWIDDLSIGDSVYHFGYKLYFVSWTDIRILPFIMMFTQLGSTIVSSNMDLKNLGAQQKFLYFGMPIMFFFILYNMPSGLLIYWITTNIFTILQQYYIKMHLS.

The next 5 helical transmembrane spans lie at 13-33 (LSLF…SNIL), 343-363 (WGLS…PLTF), 409-429 (LGGC…YSLV), 461-481 (LYFV…FTQL), and 506-526 (MPIM…IYWI).

The protein belongs to the OXA1/ALB3/YidC family. Type 1 subfamily. As to quaternary structure, interacts with the Sec translocase complex via SecD. Specifically interacts with transmembrane segments of nascent integral membrane proteins during membrane integration.

Its subcellular location is the cell inner membrane. Required for the insertion and/or proper folding and/or complex formation of integral membrane proteins into the membrane. Involved in integration of membrane proteins that insert both dependently and independently of the Sec translocase complex, as well as at least some lipoproteins. Aids folding of multispanning membrane proteins. This is Membrane protein insertase YidC from Borreliella burgdorferi (strain ZS7) (Borrelia burgdorferi).